A 340-amino-acid polypeptide reads, in one-letter code: Anthranilate phosphoribosyltransferase (340 aa).

Residues G81, 84–85 (GD), T89, 91–94 (NIST), 109–117 (KHGNRGATS), and S121 each bind 5-phospho-alpha-D-ribose 1-diphosphate. G81 is a binding site for anthranilate. Position 93 (S93) interacts with Mg(2+). N112 contacts anthranilate. Residue R167 participates in anthranilate binding. Residues D225 and E226 each coordinate Mg(2+).

The protein belongs to the anthranilate phosphoribosyltransferase family. Homodimer. Mg(2+) serves as cofactor.

It catalyses the reaction N-(5-phospho-beta-D-ribosyl)anthranilate + diphosphate = 5-phospho-alpha-D-ribose 1-diphosphate + anthranilate. It functions in the pathway amino-acid biosynthesis; L-tryptophan biosynthesis; L-tryptophan from chorismate: step 2/5. Catalyzes the transfer of the phosphoribosyl group of 5-phosphorylribose-1-pyrophosphate (PRPP) to anthranilate to yield N-(5'-phosphoribosyl)-anthranilate (PRA). This Methanocorpusculum labreanum (strain ATCC 43576 / DSM 4855 / Z) protein is Anthranilate phosphoribosyltransferase.